A 108-amino-acid chain; its full sequence is Insertion element IS629 uncharacterized 12 kDa protein S4062 (108 aa).

This sequence belongs to the transposase 8 family.

This is Insertion element IS629 uncharacterized 12 kDa protein S4062 from Shigella flexneri.